A 113-amino-acid polypeptide reads, in one-letter code: MIKLKVKKGDEVIVVTGKYKGKKGKVLKVFIDENTVIVSGVNLVKKHTKPNKMSEGGIITKESPIHISNVAHIDPKTGNPTKVAFKFLEDGSKVRIAKKSGEIIGKVGNDVKI.

It belongs to the universal ribosomal protein uL24 family. In terms of assembly, part of the 50S ribosomal subunit.

Its function is as follows. One of two assembly initiator proteins, it binds directly to the 5'-end of the 23S rRNA, where it nucleates assembly of the 50S subunit. One of the proteins that surrounds the polypeptide exit tunnel on the outside of the subunit. This chain is Large ribosomal subunit protein uL24, found in Rickettsia typhi (strain ATCC VR-144 / Wilmington).